Here is a 181-residue protein sequence, read N- to C-terminus: Shikimate kinase 2 (181 aa).

ATP is bound at residue Gly-12 to Thr-17. Mg(2+) contacts are provided by Thr-16 and Asp-32. Substrate contacts are provided by Asp-34, Arg-58, and Gly-79. Positions Glu-112–Lys-126 are LID domain. Position 120 (Arg-120) interacts with ATP. Residue Arg-139 coordinates substrate.

Belongs to the shikimate kinase family. AroL subfamily. In terms of assembly, monomer. The cofactor is Mg(2+).

Its subcellular location is the cytoplasm. It carries out the reaction shikimate + ATP = 3-phosphoshikimate + ADP + H(+). The protein operates within metabolic intermediate biosynthesis; chorismate biosynthesis; chorismate from D-erythrose 4-phosphate and phosphoenolpyruvate: step 5/7. Its function is as follows. Catalyzes the specific phosphorylation of the 3-hydroxyl group of shikimic acid using ATP as a cosubstrate. The sequence is that of Shikimate kinase 2 from Salmonella heidelberg (strain SL476).